The sequence spans 660 residues: Nuclear factor erythroid 2-related factor 3 (660 aa).

A disordered region spans residues 120–214 (SAVGDGGQSA…KTEEHKMACA (95 aa)). Positions 123-135 (GDGGQSASAGGGD) are enriched in gly residues. Composition is skewed to basic and acidic residues over residues 173–186 (MLREKSEAVDHSSQ) and 204–214 (SKTEEHKMACA). Positions 541-604 (LIRDIRRRGK…DIMRQKLHGL (64 aa)) constitute a bZIP domain. A basic motif region spans residues 543 to 562 (RDIRRRGKNKVAAQNCRKRK). Residues 566-573 (ILNLEDDI) are leucine-zipper.

It belongs to the bZIP family. CNC subfamily. In terms of assembly, heterodimer with MAFG, MAFK and other small MAF proteins that binds to the MAF recognition elements (MARE). In terms of tissue distribution, high level expression in brain, thymus, testis and placenta. Medium level expression in uterus, stomach and lung. Low level expression in kidney. No expression in heart, liver, spleen and ovary.

It localises to the nucleus. Activates erythroid-specific, globin gene expression. The polypeptide is Nuclear factor erythroid 2-related factor 3 (Nfe2l3) (Mus musculus (Mouse)).